The primary structure comprises 207 residues: UPF0319 protein VV1_2115 (207 aa).

Residues 1-18 form the signal peptide; it reads MLRVLGLAGMLMSFNIHA.

The protein belongs to the UPF0319 family.

This chain is UPF0319 protein VV1_2115, found in Vibrio vulnificus (strain CMCP6).